The sequence spans 430 residues: Acetyl-CoA acetyltransferase FG05087, mitochondrial (430 aa).

Residues 1 to 32 (MTVTQLRSAGRLAQLAGHVNGARQFSTRPALR) constitute a mitochondrion transit peptide. C122 acts as the Acyl-thioester intermediate in catalysis. Y217 is a binding site for K(+). Residue K260 participates in CoA binding. Position 278 (A278) interacts with K(+). S282 serves as a coordination point for CoA. Active-site proton acceptor residues include H385 and C413. Position 414 (N414) interacts with chloride.

The protein belongs to the thiolase-like superfamily. Thiolase family. As to quaternary structure, homotetramer. The cofactor is K(+).

Its subcellular location is the mitochondrion. The catalysed reaction is 2 acetyl-CoA = acetoacetyl-CoA + CoA. Mitochondrial acetyl-CoA acetyltransferase that catalyzes both the formation and degradation of acetoacetyl-CoA. Seems not to be involved in ergosterol biosynthesis. Plays an important role in growth, morphogenesis and maintaining mitochondrial function including the response to oxidative stresses. This chain is Acetyl-CoA acetyltransferase FG05087, mitochondrial, found in Gibberella zeae (strain ATCC MYA-4620 / CBS 123657 / FGSC 9075 / NRRL 31084 / PH-1) (Wheat head blight fungus).